Consider the following 129-residue polypeptide: Gem-associated protein 7 (129 aa).

Residue methionine 1 is modified to N-acetylmethionine. The region spanning 1 to 31 (MQSPLTIPVPVPVLRLPRGPDGFSRGFASDG) is the SUZ-C domain. The Sm domain occupies 63-129 (RYLRSLLAMV…SDIISYSFKL (67 aa)).

The protein belongs to the gemin-7 family. As to quaternary structure, part of the core SMN complex that contains SMN1, GEMIN2/SIP1, DDX20/GEMIN3, GEMIN4, GEMIN5, GEMIN6, GEMIN7, GEMIN8 and STRAP/UNRIP. Part of the SMN-Sm complex that contains SMN1, GEMIN2/SIP1, DDX20/GEMIN3, GEMIN4, GEMIN5, GEMIN6, GEMIN7, GEMIN8, STRAP/UNRIP and the Sm proteins SNRPB, SNRPD1, SNRPD2, SNRPD3, SNRPE, SNRPF and SNRPG. Interacts with GEMIN6; the interaction is direct. Interacts with STRAP/UNRIP; the interaction is direct. Interacts with GEMIN8; the interaction is direct. Interacts with SNRPB, SNRPD2, SNRPD3 and SNRPE; the interaction is direct.

The protein localises to the nucleus. It is found in the nucleoplasm. Its subcellular location is the gem. It localises to the cytoplasm. In terms of biological role, the SMN complex catalyzes the assembly of small nuclear ribonucleoproteins (snRNPs), the building blocks of the spliceosome, and thereby plays an important role in the splicing of cellular pre-mRNAs. Most spliceosomal snRNPs contain a common set of Sm proteins SNRPB, SNRPD1, SNRPD2, SNRPD3, SNRPE, SNRPF and SNRPG that assemble in a heptameric protein ring on the Sm site of the small nuclear RNA to form the core snRNP (Sm core). In the cytosol, the Sm proteins SNRPD1, SNRPD2, SNRPE, SNRPF and SNRPG are trapped in an inactive 6S pICln-Sm complex by the chaperone CLNS1A that controls the assembly of the core snRNP. To assemble core snRNPs, the SMN complex accepts the trapped 5Sm proteins from CLNS1A forming an intermediate. Binding of snRNA inside 5Sm triggers eviction of the SMN complex, thereby allowing binding of SNRPD3 and SNRPB to complete assembly of the core snRNP. In Mus musculus (Mouse), this protein is Gem-associated protein 7 (Gemin7).